The primary structure comprises 151 residues: Ribosome maturation factor RimP (151 aa).

This sequence belongs to the RimP family.

It localises to the cytoplasm. In terms of biological role, required for maturation of 30S ribosomal subunits. This Thermoanaerobacter sp. (strain X514) protein is Ribosome maturation factor RimP.